Here is a 338-residue protein sequence, read N- to C-terminus: tRNA-specific 2-thiouridylase MnmA (338 aa).

Residues 6-13 (ALSGGVDS) and M32 each bind ATP. The Nucleophile role is filled by C92. C92 and C186 form a disulfide bridge. G116 serves as a coordination point for ATP. Positions 134-136 (KDQ) are interaction with tRNA. Residue C186 is the Cysteine persulfide intermediate of the active site. Residues 288–289 (RY) are interaction with tRNA.

It belongs to the MnmA/TRMU family.

The protein localises to the cytoplasm. The catalysed reaction is S-sulfanyl-L-cysteinyl-[protein] + uridine(34) in tRNA + AH2 + ATP = 2-thiouridine(34) in tRNA + L-cysteinyl-[protein] + A + AMP + diphosphate + H(+). Its function is as follows. Catalyzes the 2-thiolation of uridine at the wobble position (U34) of tRNA, leading to the formation of s(2)U34. This Campylobacter fetus subsp. fetus (strain 82-40) protein is tRNA-specific 2-thiouridylase MnmA.